Consider the following 205-residue polypeptide: Proteasome subunit beta (205 aa).

Residues 1–9 (MNQTENMEG) constitute a propeptide, removed in mature form; by autocatalysis. The Nucleophile role is filled by Thr-10.

This sequence belongs to the peptidase T1B family. In terms of assembly, the 20S proteasome core is composed of 14 alpha and 14 beta subunits that assemble into four stacked heptameric rings, resulting in a barrel-shaped structure. The two inner rings, each composed of seven catalytic beta subunits, are sandwiched by two outer rings, each composed of seven alpha subunits. The catalytic chamber with the active sites is on the inside of the barrel. Has a gated structure, the ends of the cylinder being occluded by the N-termini of the alpha-subunits. Is capped at one or both ends by the proteasome regulatory ATPase, PAN.

Its subcellular location is the cytoplasm. It carries out the reaction Cleavage of peptide bonds with very broad specificity.. Its activity is regulated as follows. The formation of the proteasomal ATPase PAN-20S proteasome complex, via the docking of the C-termini of PAN into the intersubunit pockets in the alpha-rings, triggers opening of the gate for substrate entry. Interconversion between the open-gate and close-gate conformations leads to a dynamic regulation of the 20S proteasome proteolysis activity. In terms of biological role, component of the proteasome core, a large protease complex with broad specificity involved in protein degradation. This is Proteasome subunit beta from Methanosphaera stadtmanae (strain ATCC 43021 / DSM 3091 / JCM 11832 / MCB-3).